Reading from the N-terminus, the 127-residue chain is Cyclin-dependent kinase 2-associated protein 2 (127 aa).

Residues 1-47 (MSYKPIAPAPSSTPGSSTPGPGTPVPTAGSVPSPSGSVPGAAAPFRP) form a disordered region. Residues 9-44 (APSSTPGSSTPGPGTPVPTAGSVPSPSGSVPGAAAP) show a composition bias toward low complexity. An interaction with CDK2 region spans residues 65–107 (PPGSQGSQSTYTDLLSVIEEMGKEIRPTYAGSKSAMERLKRGI).

This sequence belongs to the CDK2AP family. In terms of assembly, component of the nucleosome remodeling and deacetylase (NuRD) repressor complex, composed of core proteins MTA1, MTA2, MTA3, RBBP4, RBBP7, HDAC1, HDAC2, MBD2, MBD3, and peripherally associated proteins CDK2AP1, CDK2AP2, GATAD2A, GATAD2B, CHD3, CHD4 and CHD5. The exact stoichiometry of the NuRD complex is unknown, and some subunits such as MBD2 and MBD3, GATAD2A and GATAD2B, and CHD3, CHD4 and CHD5 define mutually exclusive NuRD complexes. Interacts with CDK2AP1. Interacts with CDK2. Interacts with MAPK1. Phosphorylated by MAPK1 and CDK2. As to expression, oocytes (at protein level).

Its subcellular location is the cytoplasm. It localises to the nucleus. In terms of biological role, acts as a component of the histone deacetylase NuRD complex which participates in the remodeling of chromatin. Inhibits cell cycle G1/S phase transition by repressing CDK2 expression and activation; represses CDK2 activation by inhibiting its interaction with cyclin E and A. Plays a role in regulating the self-renewal of embryonic stem cells (ESCs) and in maintaining cell survival during terminal differentiation of ESCs. Regulates microtubule organization of metaphase II oocytes. The chain is Cyclin-dependent kinase 2-associated protein 2 (Cdk2ap2) from Mus musculus (Mouse).